Consider the following 445-residue polypeptide: Trigger factor (445 aa).

One can recognise a PPIase FKBP-type domain in the interval 162–247 (GDQVTIDAIG…IKAVHTAEPT (86 aa)).

Belongs to the FKBP-type PPIase family. Tig subfamily.

Its subcellular location is the cytoplasm. The enzyme catalyses [protein]-peptidylproline (omega=180) = [protein]-peptidylproline (omega=0). In terms of biological role, involved in protein export. Acts as a chaperone by maintaining the newly synthesized protein in an open conformation. Functions as a peptidyl-prolyl cis-trans isomerase. This Rickettsia akari (strain Hartford) protein is Trigger factor.